The following is a 61-amino-acid chain: MHCLPVFVILLLLTASGLSVDARPKTEDDVPLSSFRDNTKSTLQRLLKRVNCCPIDESCCS.

Positions 1 to 19 (MHCLPVFVILLLLTASGLS) are cleaved as a signal peptide. Residues 20–47 (VDARPKTEDDVPLSSFRDNTKSTLQRLL) constitute a propeptide that is removed on maturation. 4-carboxyglutamate is present on Glu-57.

In terms of processing, contains 2 disulfide bonds that can be either 'C1-C3, C2-C4' or 'C1-C4, C2-C3', since these disulfide connectivities have been observed for conotoxins with cysteine framework V (for examples, see AC P0DQQ7 and AC P81755). Contains 2 disulfide bonds. Expressed by the venom duct.

It is found in the secreted. The sequence is that of Conotoxin TeAr154 from Conus textile (Cloth-of-gold cone).